The primary structure comprises 111 residues: Putative G antigen family E member 3 (111 aa).

The segment at 1-67 (MSEHVRTRSQ…EGAPAVQGPD (67 aa)) is disordered. The span at 8-24 (RSQSSERGNDQESSQPV) shows a compositional bias: polar residues. Threonine 97 carries the phosphothreonine modification.

Belongs to the GAGE family.

This is Putative G antigen family E member 3 (PAGE2B) from Homo sapiens (Human).